The chain runs to 490 residues: GTPase Der (490 aa).

EngA-type G domains follow at residues 3 to 166 and 196 to 369; these read PVIA…PKDE and IKIA…KSAV. Residues 9–16, 56–60, 118–121, 202–209, 249–253, and 314–317 each bind GTP; these read GRPNVGKS, DTGGI, NKID, DTAGV, and NKWD. The 85-residue stretch at 370-454 folds into the KH-like domain; sequence TRWPTSRLTQ…PIRIEFKGGE (85 aa). Residues 452 to 490 are disordered; that stretch reads GGENPYEGNKNTLTDRQVNKKRRMMSHHKKADKKRRDKR. The segment covering 470–490 has biased composition (basic residues); that stretch reads NKKRRMMSHHKKADKKRRDKR.

Belongs to the TRAFAC class TrmE-Era-EngA-EngB-Septin-like GTPase superfamily. EngA (Der) GTPase family. As to quaternary structure, associates with the 50S ribosomal subunit.

Functionally, GTPase that plays an essential role in the late steps of ribosome biogenesis. The protein is GTPase Der of Pseudomonas savastanoi pv. phaseolicola (strain 1448A / Race 6) (Pseudomonas syringae pv. phaseolicola (strain 1448A / Race 6)).